The sequence spans 557 residues: Dihydroxy-acid dehydratase 2 (557 aa).

Residue C50 coordinates [2Fe-2S] cluster. Position 82 (D82) interacts with Mg(2+). C123 serves as a coordination point for [2Fe-2S] cluster. Positions 124 and 125 each coordinate Mg(2+). An N6-carboxylysine modification is found at K125. C195 is a [2Fe-2S] cluster binding site. E447 is a Mg(2+) binding site. The active-site Proton acceptor is the S473.

This sequence belongs to the IlvD/Edd family. Homodimer. Requires [2Fe-2S] cluster as cofactor. The cofactor is Mg(2+).

It carries out the reaction (2R)-2,3-dihydroxy-3-methylbutanoate = 3-methyl-2-oxobutanoate + H2O. The enzyme catalyses (2R,3R)-2,3-dihydroxy-3-methylpentanoate = (S)-3-methyl-2-oxopentanoate + H2O. It participates in amino-acid biosynthesis; L-isoleucine biosynthesis; L-isoleucine from 2-oxobutanoate: step 3/4. It functions in the pathway amino-acid biosynthesis; L-valine biosynthesis; L-valine from pyruvate: step 3/4. In terms of biological role, functions in the biosynthesis of branched-chain amino acids. Catalyzes the dehydration of (2R,3R)-2,3-dihydroxy-3-methylpentanoate (2,3-dihydroxy-3-methylvalerate) into 2-oxo-3-methylpentanoate (2-oxo-3-methylvalerate) and of (2R)-2,3-dihydroxy-3-methylbutanoate (2,3-dihydroxyisovalerate) into 2-oxo-3-methylbutanoate (2-oxoisovalerate), the penultimate precursor to L-isoleucine and L-valine, respectively. The protein is Dihydroxy-acid dehydratase 2 of Burkholderia lata (strain ATCC 17760 / DSM 23089 / LMG 22485 / NCIMB 9086 / R18194 / 383).